The chain runs to 197 residues: Large ribosomal subunit protein uL10 (197 aa).

The disordered stretch occupies residues Gly163 to Asn197.

Belongs to the universal ribosomal protein uL10 family. As to quaternary structure, part of the ribosomal stalk of the 50S ribosomal subunit. The N-terminus interacts with L11 and the large rRNA to form the base of the stalk. The C-terminus forms an elongated spine to which L12 dimers bind in a sequential fashion forming a multimeric L10(L12)X complex.

In terms of biological role, forms part of the ribosomal stalk, playing a central role in the interaction of the ribosome with GTP-bound translation factors. The polypeptide is Large ribosomal subunit protein uL10 (Pseudarthrobacter chlorophenolicus (strain ATCC 700700 / DSM 12829 / CIP 107037 / JCM 12360 / KCTC 9906 / NCIMB 13794 / A6) (Arthrobacter chlorophenolicus)).